We begin with the raw amino-acid sequence, 592 residues long: Bifunctional purine biosynthesis protein ATIC (592 aa).

Met1 bears the N-acetylmethionine mark. Residues 2–146 (APGQLALFSV…KNHARVTVVC (145 aa)) form the MGS-like domain. Residues 2-198 (APGQLALFSV…ISDYFRKQYS (197 aa)) are IMP cyclohydrolase. IMP-binding positions include 12 to 14 (SDK), 34 to 37 (SGGT), 64 to 67 (RVKT), 101 to 102 (CN), and 125 to 126 (DI). Lys137 acts as the Proton donor/acceptor; for FAICAR cyclization activity in catalysis. Lys199 is modified (N6-acetyllysine). Residues 199–592 (KGVSQMPLRY…AHTNLRLFHH (394 aa)) form an AICAR formyltransferase region. Residues 207–208 (RY), His267, Gly316, Asp339, Asn431, and Arg451 each bind 5-amino-1-(5-phospho-beta-D-ribosyl)imidazole-4-carboxamide. Residue His267 is the Proton acceptor; for AICAR formyltransferase activity of the active site. Ile452 contacts (6R)-10-formyltetrahydrofolate. Phe541 lines the 5-amino-1-(5-phospho-beta-D-ribosyl)imidazole-4-carboxamide pocket. (6R)-10-formyltetrahydrofolate is bound by residues Asp546 and 565 to 566 (SA). 5-amino-1-(5-phospho-beta-D-ribosyl)imidazole-4-carboxamide is bound at residue Arg588.

The protein belongs to the PurH family. In terms of assembly, homodimer. Associates with internalized INSR complexes on Golgi/endosomal membranes. Interacts with INSR; ATIC together with PRKAA2/AMPK2 and HACD3/PTPLAD1 is proposed to be part of a signaling network regulating INSR autophosphorylation and endocytosis. Present in the heart, brain, placenta, lung, liver, skeletal muscle, kidney, pancreas.

The protein localises to the cytoplasm. Its subcellular location is the cytosol. The catalysed reaction is (6R)-10-formyltetrahydrofolate + 5-amino-1-(5-phospho-beta-D-ribosyl)imidazole-4-carboxamide = 5-formamido-1-(5-phospho-D-ribosyl)imidazole-4-carboxamide + (6S)-5,6,7,8-tetrahydrofolate. It catalyses the reaction 10-formyldihydrofolate + 5-amino-1-(5-phospho-beta-D-ribosyl)imidazole-4-carboxamide = 5-formamido-1-(5-phospho-D-ribosyl)imidazole-4-carboxamide + 7,8-dihydrofolate. The enzyme catalyses IMP + H2O = 5-formamido-1-(5-phospho-D-ribosyl)imidazole-4-carboxamide. It carries out the reaction 5-amino-1-(5-phospho-D-ribosyl)imidazole-4-thiocarboxamide + 10-formyldihydrofolate = 6-thio-IMP + 7,8-dihydrofolate + H2O. It participates in purine metabolism; IMP biosynthesis via de novo pathway; 5-formamido-1-(5-phospho-D-ribosyl)imidazole-4-carboxamide from 5-amino-1-(5-phospho-D-ribosyl)imidazole-4-carboxamide (10-formyl THF route): step 1/1. It functions in the pathway purine metabolism; IMP biosynthesis via de novo pathway; IMP from 5-formamido-1-(5-phospho-D-ribosyl)imidazole-4-carboxamide: step 1/1. Its activity is regulated as follows. AMP and XMP inhibit AICAR formyltransferase activity. AICAR formyltransferase activity is inhibited by N-(6-fluoro-1-oxo-1,2-dihydroisoquinolin-7-yl)-5- [(3R)-3-hydroxypyrrolidin-1-yl]thiophene-2-sulfonamide (LSN 3213128), which acts as a tumor suppression in cancer cell lines. Functionally, bifunctional enzyme that catalyzes the last two steps of purine biosynthesis. Acts as a transformylase that incorporates a formyl group to the AMP analog AICAR (5-amino-1-(5-phospho-beta-D-ribosyl)imidazole-4-carboxamide) to produce the intermediate formyl-AICAR (FAICAR). Can use both 10-formyldihydrofolate and 10-formyltetrahydrofolate as the formyl donor in this reaction. Also catalyzes the cyclization of FAICAR to inosine monophosphate (IMP). Is able to convert thio-AICAR to 6-mercaptopurine ribonucleotide, an inhibitor of purine biosynthesis used in the treatment of human leukemias. Promotes insulin receptor/INSR autophosphorylation and is involved in INSR internalization. The polypeptide is Bifunctional purine biosynthesis protein ATIC (Homo sapiens (Human)).